A 583-amino-acid polypeptide reads, in one-letter code: Pentatricopeptide repeat-containing protein At2g33760 (583 aa).

PPR repeat units follow at residues 71 to 105, 106 to 140, 141 to 171, 172 to 206, 207 to 241, 242 to 276, 277 to 303, 309 to 339, and 345 to 379; these read DDFL…NVSP, SNYT…GFGL, DTYV…MPEK, SIVA…GFEP, DSAT…GLDL, NVKL…NVAA, WTAM…MEDD, NNVT…MTKS, and GVEH…GKAT. The type E motif stretch occupies residues 383-458; sequence LWTAMLGACK…QVGYSVIEVE (76 aa). The segment at 459 to 489 is type E(+) motif; it reads NKTYMFSMGDESHQETGEIYRYLETLISRCK. Residues 490–583 are type DYW motif; the sequence is EIGYAPVSEE…NGSCSCLDYW (94 aa).

The protein belongs to the PPR family. PCMP-H subfamily.

The chain is Pentatricopeptide repeat-containing protein At2g33760 (PCMP-H6) from Arabidopsis thaliana (Mouse-ear cress).